A 913-amino-acid polypeptide reads, in one-letter code: Valine--tRNA ligase (913 aa).

The 'HIGH' region motif lies at 49–59 (PNVTGNLHLGH). Residues 544 to 548 (KMSKS) carry the 'KMSKS' region motif. Lysine 547 contacts ATP. The stretch at 851–912 (DWVKKQQKRL…ERLEGVLAQL (62 aa)) forms a coiled coil.

Belongs to the class-I aminoacyl-tRNA synthetase family. ValS type 1 subfamily. Monomer.

It localises to the cytoplasm. It catalyses the reaction tRNA(Val) + L-valine + ATP = L-valyl-tRNA(Val) + AMP + diphosphate. In terms of biological role, catalyzes the attachment of valine to tRNA(Val). As ValRS can inadvertently accommodate and process structurally similar amino acids such as threonine, to avoid such errors, it has a 'posttransfer' editing activity that hydrolyzes mischarged Thr-tRNA(Val) in a tRNA-dependent manner. The protein is Valine--tRNA ligase of Deinococcus radiodurans (strain ATCC 13939 / DSM 20539 / JCM 16871 / CCUG 27074 / LMG 4051 / NBRC 15346 / NCIMB 9279 / VKM B-1422 / R1).